The following is a 354-amino-acid chain: DNA polymerase IV (354 aa).

One can recognise a UmuC domain in the interval 8 to 189 (IIHIDMDCFY…LPLQKIPGVG (182 aa)). 2 residues coordinate Mg(2+): D12 and D107. E108 is an active-site residue.

Belongs to the DNA polymerase type-Y family. In terms of assembly, monomer. It depends on Mg(2+) as a cofactor.

The protein resides in the cytoplasm. It catalyses the reaction DNA(n) + a 2'-deoxyribonucleoside 5'-triphosphate = DNA(n+1) + diphosphate. Poorly processive, error-prone DNA polymerase involved in untargeted mutagenesis. Copies undamaged DNA at stalled replication forks, which arise in vivo from mismatched or misaligned primer ends. These misaligned primers can be extended by PolIV. Exhibits no 3'-5' exonuclease (proofreading) activity. May be involved in translesional synthesis, in conjunction with the beta clamp from PolIII. The chain is DNA polymerase IV from Vibrio vulnificus (strain CMCP6).